Consider the following 311-residue polypeptide: GTP cyclohydrolase MptA (311 aa).

The protein belongs to the GTP cyclohydrolase IV family. As to quaternary structure, homodimer. Requires Fe(2+) as cofactor.

The enzyme catalyses GTP + H2O = 7,8-dihydroneopterin 2',3'-cyclic phosphate + formate + diphosphate + H(+). It functions in the pathway cofactor biosynthesis; 5,6,7,8-tetrahydromethanopterin biosynthesis. In terms of biological role, converts GTP to 7,8-dihydro-D-neopterin 2',3'-cyclic phosphate, the first intermediate in the biosynthesis of coenzyme methanopterin. In Methanocorpusculum labreanum (strain ATCC 43576 / DSM 4855 / Z), this protein is GTP cyclohydrolase MptA.